We begin with the raw amino-acid sequence, 251 residues long: Probable phosphatase Sputw3181_2734 (251 aa).

The Zn(2+) site is built by His-8, His-10, His-16, His-41, Glu-74, His-102, His-132, Asp-193, and His-195.

It belongs to the PHP family. Zn(2+) serves as cofactor.

This chain is Probable phosphatase Sputw3181_2734, found in Shewanella sp. (strain W3-18-1).